Reading from the N-terminus, the 330-residue chain is Glucan endo-1,3-beta-glucosidase GIII (330 aa).

Residues 1–25 (MARKGVDVAVALVLVALAAFPAVHS) form the signal peptide. Residue glutamate 117 is the Proton donor of the active site. Catalysis depends on glutamate 255, which acts as the Nucleophile.

It belongs to the glycosyl hydrolase 17 family.

The enzyme catalyses Hydrolysis of (1-&gt;3)-beta-D-glucosidic linkages in (1-&gt;3)-beta-D-glucans.. May provide a degree of protection against microbial invasion of germinated barley grain through its ability to degrade fungal cell wall polysaccharides. The protein is Glucan endo-1,3-beta-glucosidase GIII of Hordeum vulgare (Barley).